Here is a 438-residue protein sequence, read N- to C-terminus: Proline--tRNA ligase (438 aa).

The protein belongs to the class-II aminoacyl-tRNA synthetase family. ProS type 2 subfamily. Homodimer.

Its subcellular location is the cytoplasm. The enzyme catalyses tRNA(Pro) + L-proline + ATP = L-prolyl-tRNA(Pro) + AMP + diphosphate. Catalyzes the attachment of proline to tRNA(Pro) in a two-step reaction: proline is first activated by ATP to form Pro-AMP and then transferred to the acceptor end of tRNA(Pro). In Rhodopseudomonas palustris (strain TIE-1), this protein is Proline--tRNA ligase.